The sequence spans 1235 residues: Gem-associated protein 5 (1235 aa).

Residues 55-102 (STRINILALDVSPMWGLGNGGPTKPFAIVGDDLSVQVWDCALGEAVIG) form a WD 1 repeat. A disordered region spans residues 227–263 (NNLALSAEEWRSRNGGQEEKPKTKPPPLTKSKAAESD). Residues 234–248 (EEWRSRNGGQEEKPK) show a composition bias toward basic and acidic residues. Phosphoserine occurs at positions 289, 290, 351, and 354. Residues 340 to 368 (DCEPTKPTGPLSDASTISNKNDASDSTEG) form a disordered region. Residues 352–368 (DASTISNKNDASDSTEG) show a composition bias toward polar residues. T355 carries the phosphothreonine modification. S357 carries the post-translational modification Phosphoserine. Phosphothreonine is present on T411. WD repeat units follow at residues 428–469 (ISAE…HAGK), 475–512 (KTAG…KMLR), 565–605 (TVAF…TSCL), 611–650 (YVSS…VKTH), 690–730 (TIVN…EKSW), 739–779 (LFAR…RNWK), and 788–828 (TEKA…KPPL). An LXXLL motif motif is present at residues 443–447 (LETLL). Over residues 963–980 (KEQNNRSAKECPKCKEQS) the composition is skewed to basic and acidic residues. The interval 963 to 983 (KEQNNRSAKECPKCKEQSPDS) is disordered.

In terms of assembly, component of the core survival motor neuron (SMN) complex composed of Smn, Gem2, Gem3, rig/Gem5 and one of 3 almost identical Gem4 paralogs encoded by Glos/Gem4a, Gem4b or Gem4c. Interacts with nuclear receptors EcR, svp (seven up), usp (ultraspiracle), Hr39 and Hr3. As to expression, expressed in the brain and salivary glands of early and late second instar larvae. Expressed in nurse cells and oocytes.

It is found in the nucleus. Its subcellular location is the cytoplasm. The protein localises to the U-body. It localises to the gem. Functionally, component of the survival motor neuron (SMN) complex that catalyzes the assembly of small nuclear ribonucleoproteins (snRNPs), the building blocks of the spliceosome, and thereby plays an important role in the splicing of cellular pre-mRNAs. Nuclear receptor cofactor for the ecdysone-regulated processes of molting and puparium formation. Acts downstream from ecdysone biosynthesis and release to control the expression of specific ecdysone-regulated genes such as Eip74EF (E74). Essential in muscle and neuronal tissues for motor function, including climbing ability and flight. The polypeptide is Gem-associated protein 5 (Drosophila melanogaster (Fruit fly)).